Consider the following 430-residue polypeptide: Enolase (430 aa).

Q163 contacts (2R)-2-phosphoglycerate. The Proton donor role is filled by E205. Residues D242, E287, and D314 each coordinate Mg(2+). (2R)-2-phosphoglycerate contacts are provided by K339, R368, S369, and K390. K339 serves as the catalytic Proton acceptor.

It belongs to the enolase family. The cofactor is Mg(2+).

It localises to the cytoplasm. It is found in the secreted. The protein resides in the cell surface. It catalyses the reaction (2R)-2-phosphoglycerate = phosphoenolpyruvate + H2O. It participates in carbohydrate degradation; glycolysis; pyruvate from D-glyceraldehyde 3-phosphate: step 4/5. Its function is as follows. Catalyzes the reversible conversion of 2-phosphoglycerate (2-PG) into phosphoenolpyruvate (PEP). It is essential for the degradation of carbohydrates via glycolysis. The protein is Enolase of Exiguobacterium sp. (strain ATCC BAA-1283 / AT1b).